The chain runs to 96 residues: Defensin-like protein 151 (96 aa).

Residues 1–29 (MKKPSQLSATILTIFVILAIGVMVKETLG) form the signal peptide. Intrachain disulfides connect Cys35–Cys88, Cys48–Cys68, Cys53–Cys82, and Cys57–Cys84.

The protein belongs to the DEFL family.

It localises to the secreted. The sequence is that of Defensin-like protein 151 (LCR17) from Arabidopsis thaliana (Mouse-ear cress).